We begin with the raw amino-acid sequence, 150 residues long: Ankyrin repeat protein C18/B24 (150 aa).

An ANK repeat occupies 41–73 (ENKTLLYYAVDVNNIQFAKRLLEYGASVTTSRS).

The sequence is that of Ankyrin repeat protein C18/B24 from Vaccinia virus (strain Copenhagen) (VACV).